Reading from the N-terminus, the 156-residue chain is Tripartite terminase subunit 2 (156 aa).

Positions Met1 to Ser37 are disordered. Residues Ser19–Ser37 show a composition bias toward polar residues.

Belongs to the herpesviridae TRM2 protein family. Associates with TRM1 and TRM3 to form the tripartite terminase complex.

Its subcellular location is the host nucleus. In terms of biological role, component of the molecular motor that translocates viral genomic DNA in empty capsid during DNA packaging. Forms a tripartite terminase complex together with TRM1 and TRM3 in the host cytoplasm. Once the complex reaches the host nucleus, it interacts with the capsid portal vertex. This portal forms a ring in which genomic DNA is translocated into the capsid. The polypeptide is Tripartite terminase subunit 2 (Varicella-zoster virus (strain Dumas) (HHV-3)).